The following is a 119-amino-acid chain: NADH-quinone oxidoreductase subunit A (119 aa).

3 helical membrane passes run 9–29 (VLLF…LGYV), 63–83 (LVAI…PWAV), and 88–108 (VGMT…VGFA).

This sequence belongs to the complex I subunit 3 family. In terms of assembly, NDH-1 is composed of 14 different subunits. Subunits NuoA, H, J, K, L, M, N constitute the membrane sector of the complex.

The protein resides in the cell inner membrane. It carries out the reaction a quinone + NADH + 5 H(+)(in) = a quinol + NAD(+) + 4 H(+)(out). Functionally, NDH-1 shuttles electrons from NADH, via FMN and iron-sulfur (Fe-S) centers, to quinones in the respiratory chain. The immediate electron acceptor for the enzyme in this species is believed to be ubiquinone. Couples the redox reaction to proton translocation (for every two electrons transferred, four hydrogen ions are translocated across the cytoplasmic membrane), and thus conserves the redox energy in a proton gradient. This is NADH-quinone oxidoreductase subunit A from Paracidovorax citrulli (strain AAC00-1) (Acidovorax citrulli).